Here is a 128-residue protein sequence, read N- to C-terminus: Dehydrin Xero 1 (128 aa).

Residues 1 to 19 are compositionally biased toward polar residues; that stretch reads MESYQNQSGAQQTHQQLDQ. Positions 1–128 are disordered; that stretch reads MESYQNQSGA…IKEKLPGGHH (128 aa). Low complexity-rich tracts occupy residues 23–41 and 48–60; these read PFPATTGAYGTAGGAPAVA and GMLHRSGSSSSSS. Positions 75–91 are enriched in basic and acidic residues; it reads GITEKIKEKLPGHHDSN. Residues 92–104 are compositionally biased toward polar residues; it reads KTSSLGSTTTAYD. A compositionally biased stretch (basic and acidic residues) spans 107 to 128; the sequence is TVHHEKKGMMEKIKEKLPGGHH.

The protein belongs to the plant dehydrin family.

The sequence is that of Dehydrin Xero 1 (XERO1) from Arabidopsis thaliana (Mouse-ear cress).